The sequence spans 470 residues: MADVDELEDPMEEMTSYTFARFLRSPETEAFVRNLDRPPQMPAMRYVYLYCLCKQIQEFSGETGFCDFVSSLVQENDSQDGPSLKSIYWGLQEATDEQRTVLCSYVESMTRGQSENLMWDILRNGIISSSKLLSTIKNGPTKVFEPAPISTNHYFGGPVAFGLRCEDTVKDIVCKLICGDASANRQFGFMISPTDGIFGVSLDLCVNVESQGDFILFTDRSCIYEIKCRFKYLFSKSEFDPIYPSYTALYKRPCKRSFIRFINSIARPTVEYVPDGRLPSEGDYLLTQDEAWNLKDVRKRKLGPGHDLVADSLAANRGVESMLYVMTDPSENAGRIGIKDRVPVNIFINPRHNYFYQVLLQYKIVGDYVRHSGGGKPGRDCSPRVNIVTAFFRKRSPLDPATCTLGSDLLLDASVEIPVAVLVTPVVLPDSVIRKTLSTAAGSWKAYADNTFDTAPWVPSGLFADDESTP.

Belongs to the herpesviridae alkaline nuclease family. As to quaternary structure, forms a complex with the DNA polymerase, the DNA polymerase processivity factor, and the major DNA binding protein.

Its subcellular location is the host nucleus. It localises to the host cytoplasm. In terms of biological role, plays a role in processing non linear or branched viral DNA intermediates in order to promote the production of mature packaged unit-length linear progeny viral DNA molecules. Exhibits endonuclease and exonuclease activities and accepts both double-stranded and single-stranded DNA as substrate. Exonuclease digestion of DNA is in the 5'-&gt; 3' direction and the products are 5'-monophosphate nucleosides. Additionally, forms a recombinase with the major DNA-binding protein, which displays strand exchange activity. Also acts as a cytoplasmic RNA endonuclease that induces degradation of the majority of the cellular messenger RNAs during early lytic infection. The resulting inhibition of cellular protein synthesis serves to ensure maximal viral gene expression and evasion from host immune response. Internally cleaves host mRNAs which are then degraded by the cellular exonuclease XRN1. Bypasses therefore the regulatory steps of deadenylation and decapping normally required for XRN1 activation. This chain is Shutoff alkaline exonuclease, found in Epstein-Barr virus (strain GD1) (HHV-4).